Consider the following 159-residue polypeptide: NAD(P)H-quinone oxidoreductase subunit I, chloroplastic (159 aa).

4Fe-4S ferredoxin-type domains lie at 55–84 (GRIH…VDWN) and 95–124 (KNYS…MTEE). Cys64, Cys67, Cys70, Cys74, Cys104, Cys107, Cys110, and Cys114 together coordinate [4Fe-4S] cluster.

Belongs to the complex I 23 kDa subunit family. In terms of assembly, NDH is composed of at least 16 different subunits, 5 of which are encoded in the nucleus. [4Fe-4S] cluster is required as a cofactor.

Its subcellular location is the plastid. It localises to the chloroplast thylakoid membrane. The enzyme catalyses a plastoquinone + NADH + (n+1) H(+)(in) = a plastoquinol + NAD(+) + n H(+)(out). The catalysed reaction is a plastoquinone + NADPH + (n+1) H(+)(in) = a plastoquinol + NADP(+) + n H(+)(out). Its function is as follows. NDH shuttles electrons from NAD(P)H:plastoquinone, via FMN and iron-sulfur (Fe-S) centers, to quinones in the photosynthetic chain and possibly in a chloroplast respiratory chain. The immediate electron acceptor for the enzyme in this species is believed to be plastoquinone. Couples the redox reaction to proton translocation, and thus conserves the redox energy in a proton gradient. In Chara vulgaris (Common stonewort), this protein is NAD(P)H-quinone oxidoreductase subunit I, chloroplastic.